Here is a 405-residue protein sequence, read N- to C-terminus: Amino acid transporter AVT1I (405 aa).

Transmembrane regions (helical) follow at residues 22-42 (CFNA…YSLA), 46-66 (WLSL…SLLI), 93-113 (IIVS…FLIL), 140-160 (FMAT…LSVL), 169-189 (LATT…GIGF), 201-221 (IPTA…LPTL), 234-254 (VLLI…VLGY), 278-298 (VAIY…ITPT), 318-338 (LLIS…LPFF), 343-363 (SLVG…LCYL), and 377-397 (IMLF…TYIA).

The protein belongs to the amino acid/polyamine transporter 2 family. Amino acid/auxin permease (AAAP) (TC 2.A.18.5) subfamily.

The protein resides in the membrane. This Arabidopsis thaliana (Mouse-ear cress) protein is Amino acid transporter AVT1I.